The chain runs to 569 residues: Potassium-transporting ATPase potassium-binding subunit (569 aa).

The next 10 membrane-spanning stretches (helical) occupy residues 11–31 (LLLA…ACVF), 64–84 (LAYT…LYGI), 135–155 (AGLA…ALAV), 179–199 (LYLL…MGIP), 258–278 (FNIL…GKMV), 285–305 (WALI…VYIA), 384–404 (GLYG…LMVG), 423–443 (MLAV…AAVL), 490–510 (LGIS…AIAG), and 531–551 (LFVG…YFPA).

This sequence belongs to the KdpA family. The system is composed of three essential subunits: KdpA, KdpB and KdpC.

The protein localises to the cell inner membrane. In terms of biological role, part of the high-affinity ATP-driven potassium transport (or Kdp) system, which catalyzes the hydrolysis of ATP coupled with the electrogenic transport of potassium into the cytoplasm. This subunit binds the periplasmic potassium ions and delivers the ions to the membrane domain of KdpB through an intramembrane tunnel. The sequence is that of Potassium-transporting ATPase potassium-binding subunit from Allorhizobium ampelinum (strain ATCC BAA-846 / DSM 112012 / S4) (Agrobacterium vitis (strain S4)).